The following is a 246-amino-acid chain: NAD(P)H-hydrate epimerase (246 aa).

The YjeF N-terminal domain maps to 12 to 234; sequence AAEIDKELMG…DFANKFGFEP (223 aa). Residue 69 to 73 participates in (6S)-NADPHX binding; the sequence is NNGGD. 2 residues coordinate K(+): Asn-70 and Asp-138. (6S)-NADPHX contacts are provided by residues 142–148 and Asp-173; that span reads GFSFKPP. Position 176 (Thr-176) interacts with K(+).

The protein belongs to the NnrE/AIBP family. It depends on K(+) as a cofactor.

Its subcellular location is the cytoplasm. It is found in the mitochondrion. The enzyme catalyses (6R)-NADHX = (6S)-NADHX. It carries out the reaction (6R)-NADPHX = (6S)-NADPHX. Catalyzes the epimerization of the S- and R-forms of NAD(P)HX, a damaged form of NAD(P)H that is a result of enzymatic or heat-dependent hydration. This is a prerequisite for the S-specific NAD(P)H-hydrate dehydratase to allow the repair of both epimers of NAD(P)HX. The sequence is that of NAD(P)H-hydrate epimerase from Saccharomyces cerevisiae (strain ATCC 204508 / S288c) (Baker's yeast).